Here is a 1029-residue protein sequence, read N- to C-terminus: FYVE, RhoGEF and PH domain-containing protein tag-77 (1029 aa).

2 stretches are compositionally biased toward basic and acidic residues: residues 1 to 12 and 20 to 39; these read MKYDMNHRKNSD and TVKE…DNRF. Disordered stretches follow at residues 1–155, 185–254, and 279–370; these read MKYD…ATSE, VPRM…ERKT, and NNGV…EKDD. Over residues 42–56 the composition is skewed to pro residues; sequence QPPPPPSPRRAPPPP. Low complexity-rich tracts occupy residues 76 to 85 and 122 to 133; these read PPSSSESSEN and SSSTSDVSSQNS. Polar residues-rich tracts occupy residues 141-155 and 200-211; these read SCTT…ATSE and PISQVSTLSQVS. The span at 212–227 shows a compositional bias: acidic residues; it reads DEFDEGDTSASDEESM. The span at 316–334 shows a compositional bias: low complexity; that stretch reads SPTSGMSSSSTDDFSRITS. Residues 335-347 are compositionally biased toward polar residues; it reads MTSDRSSILTSHS. Positions 375–572 constitute a DH domain; the sequence is KLHYAAVEFL…ENVTQAVNQK (198 aa). The PH domain occupies 593–696; it reads NVLEPGRVLI…WTDDLTKAQY (104 aa). Residues Cys810, Cys823, Cys826, Cys831, Cys834, Cys851, and Cys854 each contribute to the Zn(2+) site. The FYVE-type; degenerate zinc-finger motif lies at 810–859; it reads CSTEFNIINRRHHCRDCGWLICKFCKGQAPLSKYDFTKQNVCSECFDRHY.

Its subcellular location is the cytoplasm. The protein localises to the cytoskeleton. In terms of biological role, activates cdc-42, a member of the Ras-like family of Rho- and Rac proteins, by exchanging bound GDP for free GTP. May play a role in regulating the actin cytoskeleton and cell shape. Required for normal lifespan. In Caenorhabditis elegans, this protein is FYVE, RhoGEF and PH domain-containing protein tag-77.